The sequence spans 252 residues: 3-dehydroquinate dehydratase (252 aa).

3-dehydroquinate contacts are provided by residues Ser-21, 46–48 (EWR), and Arg-82. Residue His-143 is the Proton donor/acceptor of the active site. The active-site Schiff-base intermediate with substrate is the Lys-170. 3-dehydroquinate contacts are provided by Arg-213, Ser-232, and Gln-236.

It belongs to the type-I 3-dehydroquinase family. Homodimer.

The enzyme catalyses 3-dehydroquinate = 3-dehydroshikimate + H2O. Its pathway is metabolic intermediate biosynthesis; chorismate biosynthesis; chorismate from D-erythrose 4-phosphate and phosphoenolpyruvate: step 3/7. In terms of biological role, involved in the third step of the chorismate pathway, which leads to the biosynthesis of aromatic amino acids. Catalyzes the cis-dehydration of 3-dehydroquinate (DHQ) and introduces the first double bond of the aromatic ring to yield 3-dehydroshikimate. The sequence is that of 3-dehydroquinate dehydratase from Escherichia coli O127:H6 (strain E2348/69 / EPEC).